The following is a 337-amino-acid chain: GTP 3',8-cyclase (337 aa).

The Radical SAM core domain maps to 17–243; it reads PFQRQYYYLR…HKSHTDGPAK (227 aa). Residue arginine 26 participates in GTP binding. Residues cysteine 33 and cysteine 37 each contribute to the [4Fe-4S] cluster site. Tyrosine 39 provides a ligand contact to S-adenosyl-L-methionine. A [4Fe-4S] cluster-binding site is contributed by cysteine 40. Arginine 76 is a binding site for GTP. Glycine 80 is an S-adenosyl-L-methionine binding site. Threonine 107 contributes to the GTP binding site. Serine 131 provides a ligand contact to S-adenosyl-L-methionine. Residue lysine 168 coordinates GTP. Methionine 202 provides a ligand contact to S-adenosyl-L-methionine. [4Fe-4S] cluster-binding residues include cysteine 265 and cysteine 268. Position 270–272 (270–272) interacts with GTP; that stretch reads RLR. Cysteine 282 lines the [4Fe-4S] cluster pocket.

The protein belongs to the radical SAM superfamily. MoaA family. In terms of assembly, monomer and homodimer. It depends on [4Fe-4S] cluster as a cofactor.

It catalyses the reaction GTP + AH2 + S-adenosyl-L-methionine = (8S)-3',8-cyclo-7,8-dihydroguanosine 5'-triphosphate + 5'-deoxyadenosine + L-methionine + A + H(+). It participates in cofactor biosynthesis; molybdopterin biosynthesis. Its function is as follows. Catalyzes the cyclization of GTP to (8S)-3',8-cyclo-7,8-dihydroguanosine 5'-triphosphate. The chain is GTP 3',8-cyclase from Haemophilus influenzae (strain PittGG).